Here is a 376-residue protein sequence, read N- to C-terminus: Formate dehydrogenase 1 (376 aa).

2 residues coordinate substrate: V97 and N121. Residues 176–177 (RI), D197, 244–248 (PLHKD), T270, D296, and 325–328 (HISG) contribute to the NAD(+) site.

The protein belongs to the D-isomer specific 2-hydroxyacid dehydrogenase family. FDH subfamily. As to quaternary structure, homodimer.

It localises to the cytoplasm. The catalysed reaction is formate + NAD(+) = CO2 + NADH. Catalyzes the NAD(+)-dependent oxidation of formate to carbon dioxide. Formate oxidation is the final step in the methanol oxidation pathway in methylotrophic microorganisms. Has a role in the detoxification of exogenous formate in non-methylotrophic organisms. The protein is Formate dehydrogenase 1 (FDH1) of Saccharomyces cerevisiae (strain YJM789) (Baker's yeast).